A 336-amino-acid chain; its full sequence is P2Y purinoceptor 13 (336 aa).

The Extracellular segment spans residues 1-32 (MLGTVNTTGMQGFNKSERCPRDTRMTQLLFPV). N-linked (GlcNAc...) asparagine glycans are attached at residues N6 and N14. The chain crosses the membrane as a helical span at residues 33–53 (LYTVVFFTGVLLNTLALWVFI). At 54 to 60 (HIPSNST) the chain is on the cytoplasmic side. Residues 61 to 81 (FIIYLKNTLVADLIMTLMLPF) form a helical membrane-spanning segment. Topologically, residues 82-100 (KILSDSRLAPWQLRGFVCT) are extracellular. Cysteines 99 and 176 form a disulfide. A helical transmembrane segment spans residues 101–121 (FSSVVFYETMYVGIMMLGLIA). The Cytoplasmic portion of the chain corresponds to 122–144 (FDRFLKIVVPFRKTFVKKTAFAK). A helical membrane pass occupies residues 145 to 165 (IVSISIWLLMFLISLPNMILN). Over 166 to 193 (KEATASTVKKCASLKSPLGLLWHQVVSH) the chain is Extracellular. A helical transmembrane segment spans residues 194-214 (TCQFIFWTVFILMLLFYTVIA). Residues 215–237 (KKVYDSYRKFKSRDSKHKRLEAK) lie on the Cytoplasmic side of the membrane. The chain crosses the membrane as a helical span at residues 238-258 (VFIVMAVFFVCFAPFHFVRVP). Topologically, residues 259–281 (YTHSQTTNKTDCRLENQLFLAKE) are extracellular. An N-linked (GlcNAc...) asparagine glycan is attached at N266. The helical transmembrane segment at 282 to 302 (STLFLATTNICMDPLIYIILC) threads the bilayer. Topologically, residues 303 to 336 (KKFTRKVPCMRWRTKTAASSDEHHSSQTDNITLS) are cytoplasmic.

This sequence belongs to the G-protein coupled receptor 1 family. As to expression, highest levels in spleen, liver brain and kidney. Lower but significant level are also detected in intestine, stomach, skeletal muscle, testis, heart and lung.

It localises to the cell membrane. Its function is as follows. Receptor for ADP. Coupled to G(i)-proteins. May play a role in hematopoiesis and the immune system. This chain is P2Y purinoceptor 13 (P2ry13), found in Rattus norvegicus (Rat).